The chain runs to 1331 residues: Disease resistance protein RUN1 (1331 aa).

The tract at residues 1-20 (MASTSSSRASSSSSSSSTPS) is disordered. The region spanning 25–190 (ITYDVFLSFR…EITDSIFRRL (166 aa)) is the TIR domain. Residues 34 to 39 (RGEDTR) and glycine 66 contribute to the NAD(+) site. Glutamate 100 is an active-site residue. An NB-ARC domain is found at 206-434 (SHVKEMIWRL…REPEAEILSV (229 aa)). LRR repeat units follow at residues 429-452 (AEILSVLKRSYDGLGRTEKSIFLD), 480-509 (IKNLNDKCLITLQYNRIRMHDLIQQMGWEI), 540-565 (IKRVETISLDLSKLKRVCSNSNAFAK), 616-638 (SYELRYLRWDGYPLDFLPSNFDG), 648-673 (CSNIKQLRLGNKDLEMLKVIDLSYSR), 684-708 (MPNLERLFLRGCVSLIDIHPSVGNM), 709-732 (KKLTTLSLKSCKKLKNLPDSIGDL), 734-756 (SLEILDLAYCSKFEKFPEKGGNM), 757-779 (KSLTELDLQNTAIKDLPDSIGDL), 781-803 (SLKYLDLSDCSKFEKFPEKGGNM), 804-826 (KSLRELDLRNTAIKDLPDSIRDL), 828-850 (SLERLYLSYCSKFEKFPEKGGNM), 851-873 (KSLMELDLQNTAIKDLPDSIGDL), 875-897 (SLKYLDLSNCSKFEKFPEKGGNM), 898-920 (KSLTELFLENTAIKDLPDSIGDL), 922-944 (SLVSLNLSDCSKFEKFPEKGGNM), 945-967 (KSLNWLYLNNTAIKDLPDSIGDL), 969-991 (SLMRLYLSNSSKFEKLPEKVGNM), 992-1014 (KSLELLDLRNTAIKDLPDSIGDL), and 1017-1040 (LEKLSLSNCPKFEVLPLSLKAIDA). A Nuclear localization signal motif is present at residues 1287-1291 (RKRRR).

The protein belongs to the disease resistance TIR-NB-LRR family.

It localises to the nucleus. Its subcellular location is the cytoplasm. It carries out the reaction NAD(+) + H2O = ADP-D-ribose + nicotinamide + H(+). The catalysed reaction is NADP(+) + H2O = ADP-D-ribose 2'-phosphate + nicotinamide + H(+). In terms of biological role, disease resistance (R) protein that confers resistance to multiple powdery and downy mildew by promoting cell death. Acts as a NAD(+) hydrolase (NADase): in response to activation, catalyzes cleavage of NAD(+) into ADP-D-ribose (ADPR) and nicotinamide; NAD(+) cleavage triggering a defense system that promotes cell death. Also able to hydrolyze NADP(+), but not other NAD(+)-related molecules. The chain is Disease resistance protein RUN1 from Vitis rotundifolia (Muscadine grape).